The sequence spans 203 residues: Large ribosomal subunit protein uL6 (203 aa).

This sequence belongs to the universal ribosomal protein uL6 family. In terms of assembly, part of the 50S ribosomal subunit.

Functionally, this protein binds to the 23S rRNA, and is important in its secondary structure. It is located near the subunit interface in the base of the L7/L12 stalk, and near the tRNA binding site of the peptidyltransferase center. This is Large ribosomal subunit protein uL6 from Hyphomonas neptunium (strain ATCC 15444).